The chain runs to 163 residues: Nucleotide-binding protein PC1_1036 (163 aa).

Belongs to the YajQ family.

Its function is as follows. Nucleotide-binding protein. The sequence is that of Nucleotide-binding protein PC1_1036 from Pectobacterium carotovorum subsp. carotovorum (strain PC1).